A 122-amino-acid chain; its full sequence is Large ribosomal subunit protein bL20 (122 aa).

Belongs to the bacterial ribosomal protein bL20 family.

Binds directly to 23S ribosomal RNA and is necessary for the in vitro assembly process of the 50S ribosomal subunit. It is not involved in the protein synthesizing functions of that subunit. The sequence is that of Large ribosomal subunit protein bL20 (rplT) from Treponema pallidum (strain Nichols).